A 1128-amino-acid chain; its full sequence is MSSSRPTQCSSSSSRTRQSSRARILAQTTLDAELNAEYEEYGDSFDYSKLVEAQRTTGPEQQARSEKVIAYLHHIQRAKLIQPFGCLLALDEKTFNVIALSENAPEMLTTVSHAVPSVDDPPKLRIGTNVWSLFTDPGATALQKALGFADVSLLNPILVQCKTSGKPFYAIVHRATGCLVVDFEPVKPTEFPATAAGALQSYKLAAKAISKIQSLPGGSMEVLCNTVVKELFDLTGYDRVMAYKFHEDDHGEVFAEITKPGLEPYLGLHYPATDIPQAARFLFMKNKVRMICDCRARSIKIIEDESLHLDISLCGSTLRAPHSCHLQYMENMNSIASLVMAVVVNENEDDDEVGADQPAQQQKRKKLWGLLVCHHESPRYVPFPLRYACEFLAQVFAVHVNKEFELERQVREKSILRMQTMLSDMLLRESSPLSIVSGTPNIMDLVKCDGAALLYGGKVWRLQNAPTESQIRDIAFWLSDVHRDSTGLSTDSLHDAGYPGAAALGDMICGMAVAKINSKDILFWFRSHTAAEIRWGGAKHDPSDKDDSRRMHPRLSFKAFLEVVKMKSLPWNDYEMDAIHSLQLILRGTLNDDIKPTRAASLDNQVGDLKLDGLAELQAVTSEMVRLMETATVPILAVDSNGLVNGWNQKVAELTGLRVDEAIGRHILTVVEESSVPVVQRMLYLALQGKEEKEVKFEVKTHGSKRDDGPVILVVNACASRDLHDHVVGVCFVAQDMTVHKLVMDKFTRVEGDYKAIIHNPSPLIPPIFGADEFGWCSEWNAAMTKLTGWHRDEVINKMLLGEVFDSTNASCLVKNKDAFVSLCILINSALAGDETEKAPFSFFDRNGKYIECLLSVNRKVNADGVITGVFCFIQVPSHELQHALHVQQASQQNALTKLKAYSYMRHAINNPLSGMLYSRKALKNTGLNEEQMKEVNVADSCHRQLNKILSDLDQDSVMNKSSCLDLEMVEFVLQDVFVAAVSQVLITCQGKGIRVSCNLPERYMKQTVYGDGVRLQQILSDFLFVSVKFSPVGGSVEISCSLTKNSIGENLHLIDLELRIKHQGKGVPADLLSQMYEDDNKEQSDEGMSLAVSRNLLRLMNGDVRHMREAGMSTFILSVELASAPAK.

The segment covering 1–21 (MSSSRPTQCSSSSSRTRQSSR) has biased composition (low complexity). The tract at residues 1-24 (MSSSRPTQCSSSSSRTRQSSRARI) is disordered. Residues 219–404 (SMEVLCNTVV…VFAVHVNKEF (186 aa)) enclose the GAF domain. Position 324 (C324) interacts with phytochromobilin. PAS domains are found at residues 620 to 690 (VTSE…LQGK) and 750 to 834 (VEGD…LAGD). Positions 904–1124 (YMRHAINNPL…TFILSVELAS (221 aa)) constitute a Histidine kinase domain.

It belongs to the phytochrome family. Homodimer. In terms of processing, contains one covalently linked phytochromobilin chromophore.

Functionally, regulatory photoreceptor which exists in two forms that are reversibly interconvertible by light: the Pr form that absorbs maximally in the red region of the spectrum and the Pfr form that absorbs maximally in the far-red region. Photoconversion of Pr to Pfr induces an array of morphogenic responses, whereas reconversion of Pfr to Pr cancels the induction of those responses. Pfr controls the expression of a number of nuclear genes including those encoding the small subunit of ribulose-bisphosphate carboxylase, chlorophyll A/B binding protein, protochlorophyllide reductase, rRNA, etc. It also controls the expression of its own gene(s) in a negative feedback fashion. This Oryza sativa subsp. indica (Rice) protein is Phytochrome A (PHYA).